A 672-amino-acid chain; its full sequence is DNA ligase (672 aa).

NAD(+) is bound by residues 35–39 (DAQYD), 84–85 (SL), and Glu115. The N6-AMP-lysine intermediate role is filled by Lys117. NAD(+)-binding residues include Arg138, Glu178, Lys294, and Lys318. Residues Cys412, Cys415, Cys430, and Cys435 each contribute to the Zn(2+) site. In terms of domain architecture, BRCT spans 592-672 (ATGGPFVGKS…AFLQMLQTNA (81 aa)).

Belongs to the NAD-dependent DNA ligase family. LigA subfamily. It depends on Mg(2+) as a cofactor. Requires Mn(2+) as cofactor.

It catalyses the reaction NAD(+) + (deoxyribonucleotide)n-3'-hydroxyl + 5'-phospho-(deoxyribonucleotide)m = (deoxyribonucleotide)n+m + AMP + beta-nicotinamide D-nucleotide.. Functionally, DNA ligase that catalyzes the formation of phosphodiester linkages between 5'-phosphoryl and 3'-hydroxyl groups in double-stranded DNA using NAD as a coenzyme and as the energy source for the reaction. It is essential for DNA replication and repair of damaged DNA. This is DNA ligase from Myxococcus xanthus (strain DK1622).